We begin with the raw amino-acid sequence, 415 residues long: N-succinylarginine dihydrolase (415 aa).

Substrate-binding positions include 18-27, asparagine 100, and 127-128; these read AGLSRGNIAS and HR. The active site involves glutamate 161. Arginine 193 serves as a coordination point for substrate. Histidine 229 is a catalytic residue. Residues aspartate 231 and asparagine 340 each contribute to the substrate site. The active-site Nucleophile is the cysteine 346.

The protein belongs to the succinylarginine dihydrolase family. Homodimer.

The catalysed reaction is N(2)-succinyl-L-arginine + 2 H2O + 2 H(+) = N(2)-succinyl-L-ornithine + 2 NH4(+) + CO2. The protein operates within amino-acid degradation; L-arginine degradation via AST pathway; L-glutamate and succinate from L-arginine: step 2/5. Catalyzes the hydrolysis of N(2)-succinylarginine into N(2)-succinylornithine, ammonia and CO(2). This Sphingopyxis alaskensis (strain DSM 13593 / LMG 18877 / RB2256) (Sphingomonas alaskensis) protein is N-succinylarginine dihydrolase.